Reading from the N-terminus, the 129-residue chain is UPF0146 protein VNG_2609C (129 aa).

It belongs to the UPF0146 family.

This chain is UPF0146 protein VNG_2609C, found in Halobacterium salinarum (strain ATCC 700922 / JCM 11081 / NRC-1) (Halobacterium halobium).